Here is a 220-residue protein sequence, read N- to C-terminus: UPF0643 protein PB2B2.08 (220 aa).

This sequence belongs to the UPF0643 family.

It localises to the cytoplasm. It is found in the nucleus. In Schizosaccharomyces pombe (strain 972 / ATCC 24843) (Fission yeast), this protein is UPF0643 protein PB2B2.08.